The following is a 302-amino-acid chain: Recombination-associated protein RdgC (302 aa).

Belongs to the RdgC family.

It is found in the cytoplasm. Its subcellular location is the nucleoid. Functionally, may be involved in recombination. The chain is Recombination-associated protein RdgC from Proteus mirabilis (strain HI4320).